The primary structure comprises 402 residues: MAETSEEVAVLVQRVVKDITNAFRRNPHIDEIGLIPCPEARYNRSPIVLVENKLGVESWCVKFLLPYVHNKLLLYRTRKQWLNRDELIDVTCTLLLLNPDFTTAWNVRKELILSGTLNPIKDLHLGKLALTKFPKSPETWIHRRWVLQQLIQETSLPSFVTKGNLGTIPTERAQRLIQEEMEVCGEAAGRYPSNYNAWSHRIWVLQHLAKLDVKILLDELSSTKHWASMHVSDHSGFHYRQFLLKSLISQTVIDSSVMEQNPLRSEPALVPPKDEEAAVSTEEPRINLPHLLEEEVEFSTDLIDSYPGHETLWCHRRHIFYLQHHLNAGSQLSQAMEVDGLNDSSKQGYSQETKRLKRTPVPDSLGLEMEHRFIDQVLSTCRNVEQARFASAYRKWLVTLSQ.

A2 carries the N-acetylalanine modification. PFTA repeat units follow at residues 87 to 120, 122 to 155, 180 to 213, and 219 to 252; these read LIDV…LNPI, DLHL…QETS, EMEV…KLDV, and ELSS…SQTV. Residues 263 to 282 are disordered; that stretch reads LRSEPALVPPKDEEAAVSTE. The stretch at 295–328 is one PFTA 5 repeat; it reads EVEFSTDLIDSYPGHETLWCHRRHIFYLQHHLNA.

It belongs to the protein prenyltransferase subunit alpha family.

The polypeptide is Protein prenyltransferase alpha subunit repeat-containing protein 1 (PTAR1) (Homo sapiens (Human)).